The chain runs to 507 residues: Photosystem II CP47 reaction center protein (507 aa).

Topologically, residues 2–16 (GLPWYRVHTVVLNDP) are cytoplasmic. Residues 17–39 (GRLISVHLMHTALVAGWAGSMAL) form a helical membrane-spanning segment. The Lumenal, thylakoid portion of the chain corresponds to 40 to 94 (YELAIFDSSDAVLNPMWRQGMFVLPFMARLGVTSSWNGWSVTGETGLDPGFWSFE). Residues 95-116 (GVAAAHIVLSGLLFLAAVWHWV) form a helical membrane-spanning segment. Residues 117 to 134 (FWDLELFVDPRTGESALD) are Cytoplasmic-facing. Residues 135-159 (LPKMFGIHLFLSGLLCFGFGAFHLT) traverse the membrane as a helical segment. Over 160 to 196 (GVWGPGMWVSDPYGLTGHVQPVAPEWGPAGFNPFNPG) the chain is Lumenal, thylakoid. A helical membrane pass occupies residues 197–218 (GVVAHHIAAGIVGIIAGLFHLT). The Cytoplasmic segment spans residues 219–233 (VRPPERLYKALRMGN). The helical transmembrane segment at 234–255 (IETVLSSSIAAVFFAAFVVAGT) threads the bilayer. At 256–450 (MWYGNATTPI…GVFRTSPRGW (195 aa)) the chain is on the lumenal, thylakoid side. The chain crosses the membrane as a helical span at residues 451 to 474 (FTFGHAVFALLFFFGHIWHGSRTL). The Cytoplasmic segment spans residues 475–507 (FRDVFAGVDPGLEEQVEFGVFAKVGDLSTRKEA).

This sequence belongs to the PsbB/PsbC family. PsbB subfamily. PSII is composed of 1 copy each of membrane proteins PsbA, PsbB, PsbC, PsbD, PsbE, PsbF, PsbH, PsbI, PsbJ, PsbK, PsbL, PsbM, PsbT, PsbX, Psb30/Ycf12, peripheral proteins PsbO, CyanoQ (PsbQ), PsbU, PsbV and a large number of cofactors. It forms dimeric complexes. Contacts PsbQ. Requires Binds multiple chlorophylls. PSII binds additional chlorophylls, carotenoids and specific lipids. as cofactor.

It is found in the cellular thylakoid membrane. In terms of biological role, one of the components of the core complex of photosystem II (PSII). It binds chlorophyll and helps catalyze the primary light-induced photochemical processes of PSII. PSII is a light-driven water:plastoquinone oxidoreductase, using light energy to abstract electrons from H(2)O, generating O(2) and a proton gradient subsequently used for ATP formation. This chain is Photosystem II CP47 reaction center protein, found in Synechocystis sp. (strain ATCC 27184 / PCC 6803 / Kazusa).